The chain runs to 418 residues: Putative ion-transport protein YfeO (418 aa).

12 helical membrane passes run 10–30, 54–74, 99–119, 120–140, 149–169, 186–206, 223–243, 258–278, 300–320, 322–342, 343–363, and 371–391; these read LLLS…LIMV, DSPL…GLVI, ALPG…SLGP, EHPI…RLLP, ILAS…AALI, LFAP…FFHP, ILSG…AVWC, VFVL…GGPV, DYFL…ASGF, GGRI…LHEH, VPAV…VLVV, and LFMA…CIVM.

The protein belongs to the chloride channel (TC 2.A.49) family.

The protein localises to the cell membrane. In Escherichia coli O45:K1 (strain S88 / ExPEC), this protein is Putative ion-transport protein YfeO.